The primary structure comprises 427 residues: Homoprotocatechuate catabolism bifunctional isomerase/decarboxylase (427 aa).

Approximate repeat units follow at residues 1 to 202 and 203 to 405; these read MKGT…LENP and VVDE…VGDE. Glu-276, Glu-278, and Asp-307 together coordinate a divalent metal cation.

It belongs to the FAH family. Monomer. It depends on Mg(2+) as a cofactor.

The catalysed reaction is (2E,4Z)-5-hydroxypenta-2,4-diene-1,2,5-tricarboxylate = (3E,5R)-5-carboxy-2-oxohept-3-enedioate. The enzyme catalyses (3E,5R)-5-carboxy-2-oxohept-3-enedioate + H(+) = (4Z)-2-oxohept-4-enedioate + CO2. Its pathway is aromatic compound metabolism; 4-hydroxyphenylacetate degradation; pyruvate and succinate semialdehyde from 4-hydroxyphenylacetate: step 4/7. The protein operates within aromatic compound metabolism; 4-hydroxyphenylacetate degradation; pyruvate and succinate semialdehyde from 4-hydroxyphenylacetate: step 5/7. In terms of biological role, decarboxylates OPET (5-oxo-pent-3-ene-1,2,5-tricarboxylic acid) into HHDD (2-hydroxy-hept-2,4-diene-1,7-dioate) and isomerizes it to OHED (2-oxo-hept-3-ene-1,7-dioate). The polypeptide is Homoprotocatechuate catabolism bifunctional isomerase/decarboxylase (hpcE) (Escherichia coli).